The following is a 363-amino-acid chain: MSNQDLINNKSKAGLTYAKAGVNIDMGNAMVEKIKPFIRATKRAGADAEIGGFGGLFDLKAAGFTDPILVAANDGVGTKLKIAIEVGHHNTVGIDLVAMCVNDLLVQGAEPLFFLDYFATGKLDPEQGAAIVSGIAEGCKQSGAALIGGETAEMPGMYAEGDYDLAGFAVGACERSMLLPSKNLTEGDIILGLSASGIHSNGFSLVRRIIEQNDLKWNDPAPFDPSNNLGVALLTPTRIYVKSLLPIMRKYEGVKALAHITGGGFLENIPRVIPSSLCAEINLSTINVPSVFSWIAKQGKIEETEMLRTFNCGIGMIIIVGQHTAEAVTQALEKNGETVTPLGILTKRQDQNKGILYRGVLHL.

Belongs to the AIR synthase family.

The protein localises to the cytoplasm. The catalysed reaction is 2-formamido-N(1)-(5-O-phospho-beta-D-ribosyl)acetamidine + ATP = 5-amino-1-(5-phospho-beta-D-ribosyl)imidazole + ADP + phosphate + H(+). Its pathway is purine metabolism; IMP biosynthesis via de novo pathway; 5-amino-1-(5-phospho-D-ribosyl)imidazole from N(2)-formyl-N(1)-(5-phospho-D-ribosyl)glycinamide: step 2/2. This is Phosphoribosylformylglycinamidine cyclo-ligase from Bartonella tribocorum (strain CIP 105476 / IBS 506).